The chain runs to 170 residues: Inosine/xanthosine triphosphatase (170 aa).

This sequence belongs to the YjjX NTPase family. As to quaternary structure, homodimer. The cofactor is Mg(2+). Mn(2+) serves as cofactor.

It catalyses the reaction XTP + H2O = XDP + phosphate + H(+). It carries out the reaction ITP + H2O = IDP + phosphate + H(+). Functionally, phosphatase that hydrolyzes non-canonical purine nucleotides such as XTP and ITP to their respective diphosphate derivatives. Probably excludes non-canonical purines from DNA/RNA precursor pool, thus preventing their incorporation into DNA/RNA and avoiding chromosomal lesions. The chain is Inosine/xanthosine triphosphatase from Aliivibrio fischeri (strain ATCC 700601 / ES114) (Vibrio fischeri).